We begin with the raw amino-acid sequence, 156 residues long: Transcriptional repressor NrdR (156 aa).

A zinc finger spans residues 3–34 (CPFCGNVDTQVKDSRPAEDHVAIRRRRFCPAC). An ATP-cone domain is found at 49–139 (LVVIKSNGKR…VYKNFQATGD (91 aa)).

This sequence belongs to the NrdR family. The cofactor is Zn(2+).

Its function is as follows. Negatively regulates transcription of bacterial ribonucleotide reductase nrd genes and operons by binding to NrdR-boxes. The polypeptide is Transcriptional repressor NrdR (Jannaschia sp. (strain CCS1)).